A 151-amino-acid polypeptide reads, in one-letter code: UPF0208 membrane protein Ent638_2839 (151 aa).

Helical transmembrane passes span 46-65 and 69-91; these read YAIR…QIAL and LGPA…WWLG.

Belongs to the UPF0208 family.

It is found in the cell inner membrane. This is UPF0208 membrane protein Ent638_2839 from Enterobacter sp. (strain 638).